Reading from the N-terminus, the 66-residue chain is Conotoxin Cl14.1b (66 aa).

An N-terminal signal peptide occupies residues 1–19; sequence MNVTVMFLVLLLTMPLTDG. A propeptide spanning residues 20–47 is cleaved from the precursor; sequence FNIRAINGGELFGLVQRDAGNALDHGFY.

The protein belongs to the conotoxin L superfamily. In terms of processing, contains 2 disulfide bonds. In terms of tissue distribution, expressed by the venom duct.

It localises to the secreted. This is Conotoxin Cl14.1b from Californiconus californicus (California cone).